Here is a 77-residue protein sequence, read N- to C-terminus: SS18-like protein 2 (77 aa).

The short motif at 50-53 is the SH2-binding element; the sequence is YQHV.

The protein belongs to the SS18 family.

The sequence is that of SS18-like protein 2 (Ss18l2) from Mus musculus (Mouse).